The following is a 96-amino-acid chain: Aspartyl/glutamyl-tRNA(Asn/Gln) amidotransferase subunit C (96 aa).

Belongs to the GatC family. As to quaternary structure, heterotrimer of A, B and C subunits.

It carries out the reaction L-glutamyl-tRNA(Gln) + L-glutamine + ATP + H2O = L-glutaminyl-tRNA(Gln) + L-glutamate + ADP + phosphate + H(+). The catalysed reaction is L-aspartyl-tRNA(Asn) + L-glutamine + ATP + H2O = L-asparaginyl-tRNA(Asn) + L-glutamate + ADP + phosphate + 2 H(+). Its function is as follows. Allows the formation of correctly charged Asn-tRNA(Asn) or Gln-tRNA(Gln) through the transamidation of misacylated Asp-tRNA(Asn) or Glu-tRNA(Gln) in organisms which lack either or both of asparaginyl-tRNA or glutaminyl-tRNA synthetases. The reaction takes place in the presence of glutamine and ATP through an activated phospho-Asp-tRNA(Asn) or phospho-Glu-tRNA(Gln). This Acaryochloris marina (strain MBIC 11017) protein is Aspartyl/glutamyl-tRNA(Asn/Gln) amidotransferase subunit C.